The primary structure comprises 153 residues: Putative nuclear shuttle protein (153 aa).

This sequence belongs to the nanoviridae nuclear shuttle protein family.

Its subcellular location is the host nucleus. The protein localises to the host cytoplasm. In terms of biological role, putative nuclear shuttle protein. This chain is Putative nuclear shuttle protein (DNA-N), found in Cicer arietinum (Chickpea).